Reading from the N-terminus, the 156-residue chain is ATP synthase subunit b (156 aa).

The chain crosses the membrane as a helical span at residues 12–32 (VAFFIFVLFCMKFVWPPVIAA).

This sequence belongs to the ATPase B chain family. F-type ATPases have 2 components, F(1) - the catalytic core - and F(0) - the membrane proton channel. F(1) has five subunits: alpha(3), beta(3), gamma(1), delta(1), epsilon(1). F(0) has three main subunits: a(1), b(2) and c(10-14). The alpha and beta chains form an alternating ring which encloses part of the gamma chain. F(1) is attached to F(0) by a central stalk formed by the gamma and epsilon chains, while a peripheral stalk is formed by the delta and b chains.

The protein resides in the cell inner membrane. F(1)F(0) ATP synthase produces ATP from ADP in the presence of a proton or sodium gradient. F-type ATPases consist of two structural domains, F(1) containing the extramembraneous catalytic core and F(0) containing the membrane proton channel, linked together by a central stalk and a peripheral stalk. During catalysis, ATP synthesis in the catalytic domain of F(1) is coupled via a rotary mechanism of the central stalk subunits to proton translocation. Functionally, component of the F(0) channel, it forms part of the peripheral stalk, linking F(1) to F(0). The chain is ATP synthase subunit b from Pseudomonas syringae pv. syringae (strain B728a).